We begin with the raw amino-acid sequence, 487 residues long: Capsid protein (487 aa).

Residues 1-66 (MNQDTPLANL…VPPAGPSRSA (66 aa)) form a disordered region. The span at 30 to 41 (NVAPPAQGAVQQ) shows a compositional bias: low complexity.

The protein resides in the virion. Functionally, the capsid protein self-assembles to form an icosahedral capsid with a T=2 symmetry made of 120 subunits. The sequence is that of Capsid protein from Trifolium repens (Creeping white clover).